The primary structure comprises 887 residues: Chaperone protein ClpB 2 (887 aa).

The Clp R domain maps to 6-147 (PTKFTDKAWE…AATVKAIRGA (142 aa)). 2 repeat regions span residues 9–73 (FTDK…ARQQ) and 84–147 (CGRS…IRGA). Positions 160-342 (AALEKYGRDL…RRFQQVYIGQ (183 aa)) are NBD1. Residue 207–214 (GEPGVGKT) participates in ATP binding. Residues 343 to 559 (PSVEDTISIL…IAEIVAKWTG (217 aa)) are linker. Positions 393–535 (IDLVDEAAAK…TEAQLLELQA (143 aa)) form a coiled coil. Positions 569-780 (ERQKLLQLEQ…RIDDVILFHG (212 aa)) are NBD2. 619–626 (GPTGVGKT) is an ATP binding site. The segment at 781–887 (LGRTELAQIA…TGDRDTVSAS (107 aa)) is C-terminal.

It belongs to the ClpA/ClpB family. Homohexamer. The oligomerization is ATP-dependent.

The protein resides in the cytoplasm. Its function is as follows. Part of a stress-induced multi-chaperone system, it is involved in the recovery of the cell from heat-induced damage, in cooperation with DnaK, DnaJ and GrpE. Acts before DnaK, in the processing of protein aggregates. Protein binding stimulates the ATPase activity; ATP hydrolysis unfolds the denatured protein aggregates, which probably helps expose new hydrophobic binding sites on the surface of ClpB-bound aggregates, contributing to the solubilization and refolding of denatured protein aggregates by DnaK. In Thermosynechococcus vestitus (strain NIES-2133 / IAM M-273 / BP-1), this protein is Chaperone protein ClpB 2 (clpB2).